The primary structure comprises 394 residues: Guanine nucleotide-binding protein G(s) subunit alpha (394 aa).

The segment at 1–23 is disordered; sequence MGCLGNSKTEDQRNEEKAQREAN. A lipid anchor (N-palmitoyl glycine) is attached at glycine 2. The S-palmitoyl cysteine moiety is linked to residue cysteine 3. Residues 8-23 show a composition bias toward basic and acidic residues; sequence KTEDQRNEEKAQREAN. One can recognise a G-alpha domain in the interval 39–394; that stretch reads ATHRLLLLGA…RMHLRQYELL (356 aa). The G1 motif stretch occupies residues 42 to 55; it reads RLLLLGAGESGKST. 47-55 is a binding site for GTP; it reads GAGESGKST. A Mg(2+)-binding site is contributed by serine 54. The interval 68–90 is disordered; sequence FNGEGGEEDPQAARSNSDGEKAT. The G2 motif stretch occupies residues 196-204; sequence DLLRCRVLT. Residues 197-204, 223-227, 292-295, and alanine 366 each bind GTP; these read LLRCRVLT, DVGGQ, and NKQD. Threonine 204 contacts Mg(2+). The G3 motif stretch occupies residues 219-228; that stretch reads FHMFDVGGQR. Positions 288–295 are G4 motif; the sequence is ILFLNKQD. A G5 motif region spans residues 364–369; sequence TCAVDT.

Belongs to the G-alpha family. G(s) subfamily. Heterotrimeric G proteins are composed of 3 units; alpha, beta and gamma. The alpha chain contains the guanine nucleotide binding site. Interacts with CRY1; the interaction may block GPCR-mediated regulation of cAMP concentrations. Interacts with ADCY6 and stimulates its adenylyl cyclase activity. Interacts with ADCY2 and ADCY5. Stimulates the ADCY5 adenylyl cyclase activity. Interaction with SASH1.

It is found in the cell membrane. In terms of biological role, guanine nucleotide-binding proteins (G proteins) function as transducers in numerous signaling pathways controlled by G protein-coupled receptors (GPCRs). Signaling involves the activation of adenylyl cyclases, resulting in increased levels of the signaling molecule cAMP. GNAS functions downstream of several GPCRs, including beta-adrenergic receptors. Stimulates the Ras signaling pathway via RAPGEF2. The sequence is that of Guanine nucleotide-binding protein G(s) subunit alpha (GNAS) from Cricetulus griseus (Chinese hamster).